Reading from the N-terminus, the 179-residue chain is Peptide deformylase 2 (179 aa).

Cys-101 and His-143 together coordinate Fe cation. Glu-144 is a catalytic residue. His-147 lines the Fe cation pocket.

It belongs to the polypeptide deformylase family. Fe(2+) is required as a cofactor.

It catalyses the reaction N-terminal N-formyl-L-methionyl-[peptide] + H2O = N-terminal L-methionyl-[peptide] + formate. Its function is as follows. Removes the formyl group from the N-terminal Met of newly synthesized proteins. Requires at least a dipeptide for an efficient rate of reaction. N-terminal L-methionine is a prerequisite for activity but the enzyme has broad specificity at other positions. This Pseudomonas syringae pv. tomato (strain ATCC BAA-871 / DC3000) protein is Peptide deformylase 2.